The following is a 651-amino-acid chain: Aspartate--tRNA ligase, mitochondrial (651 aa).

Residues 1–44 (MFCWLSRLCGELSTPTRRTTQLIWSSAARSMVLSSQRIPELSSF) constitute a mitochondrion transit peptide. Position 216 is a phosphothreonine (Thr-216). At Ser-239 the chain carries Phosphoserine. The aspartate stretch occupies residues 241 to 244 (QQFK). Arg-263 is an L-aspartate binding site. 263-265 (RDE) is an ATP binding site. Position 379 is an N6-acetyllysine (Lys-379). Glu-532 contributes to the ATP binding site. Arg-539 contacts L-aspartate. 581-584 (GLDR) is an ATP binding site.

This sequence belongs to the class-II aminoacyl-tRNA synthetase family. Type 1 subfamily. As to quaternary structure, homodimer.

It is found in the mitochondrion matrix. It localises to the mitochondrion membrane. The catalysed reaction is tRNA(Asp) + L-aspartate + ATP = L-aspartyl-tRNA(Asp) + AMP + diphosphate. Functionally, catalyzes the attachment of aspartate to tRNA(Asp) in a two-step reaction: aspartate is first activated by ATP to form Asp-AMP and then transferred to the acceptor end of tRNA(Asp). The sequence is that of Aspartate--tRNA ligase, mitochondrial (DARS2) from Bos taurus (Bovine).